A 150-amino-acid chain; its full sequence is MTIADNKKAFFDYFIEERFEAGIVLEGWEVKAIRAGRVQIKEGYVVVRDAEMFLIGAHISPLQSASTHVNPDPVRTRKLLLKADEIKKLIGKVEQRGYTLVPLNLHYTRGRVKCEIGLGKGKKLFDKRETEKQRDWQREKSRIMKGGSKE.

Residues 129-150 (ETEKQRDWQREKSRIMKGGSKE) are disordered.

The protein belongs to the SmpB family.

It localises to the cytoplasm. Its function is as follows. Required for rescue of stalled ribosomes mediated by trans-translation. Binds to transfer-messenger RNA (tmRNA), required for stable association of tmRNA with ribosomes. tmRNA and SmpB together mimic tRNA shape, replacing the anticodon stem-loop with SmpB. tmRNA is encoded by the ssrA gene; the 2 termini fold to resemble tRNA(Ala) and it encodes a 'tag peptide', a short internal open reading frame. During trans-translation Ala-aminoacylated tmRNA acts like a tRNA, entering the A-site of stalled ribosomes, displacing the stalled mRNA. The ribosome then switches to translate the ORF on the tmRNA; the nascent peptide is terminated with the 'tag peptide' encoded by the tmRNA and targeted for degradation. The ribosome is freed to recommence translation, which seems to be the essential function of trans-translation. This chain is SsrA-binding protein, found in Cupriavidus pinatubonensis (strain JMP 134 / LMG 1197) (Cupriavidus necator (strain JMP 134)).